The following is a 290-amino-acid chain: OTU domain-containing protein 6A (290 aa).

A disordered region spans residues 27 to 117 (QTLKASVPKN…RRHQERMPAA (91 aa)). A compositionally biased stretch (basic and acidic residues) spans 49 to 68 (SRLEAEMEQRHKQELEKFGE). Over residues 95–108 (KAQKRRDRRAHQER) the composition is skewed to basic residues. The 135-residue stretch at 142 to 276 (LEMKTIPADG…GEHYNSVKPI (135 aa)) folds into the OTU domain. Residues 147 to 153 (IPADGHC) are cys-loop. The active site involves Asp150. Cys153 functions as the Nucleophile in the catalytic mechanism. The interval 211–221 (IVHNASWGGQL) is variable-loop. The tract at residues 259–269 (YLHYACDFGEH) is his-loop. His269 is a catalytic residue.

The catalysed reaction is Thiol-dependent hydrolysis of ester, thioester, amide, peptide and isopeptide bonds formed by the C-terminal Gly of ubiquitin (a 76-residue protein attached to proteins as an intracellular targeting signal).. In terms of biological role, deubiquitinating enzyme that hydrolyzes 'Lys-27'-, 'Lys-29'- and 'Lys-33'-linked polyubiquitin chains. Also able to hydrolyze 'Lys-11'-linked ubiquitin chains. The protein is OTU domain-containing protein 6A (Otud6a) of Mus musculus (Mouse).